A 585-amino-acid polypeptide reads, in one-letter code: Glutamate decarboxylase 2 (585 aa).

The segment at 1–25 (MASPGSGFWSFGSEDGSGDPENPGT) is disordered. Serine 3, serine 6, serine 10, serine 13, and serine 17 each carry phosphoserine. S-palmitoyl cysteine attachment occurs at residues cysteine 30 and cysteine 45. 181 to 183 (QLS) contributes to the substrate binding site. At lysine 396 the chain carries N6-(pyridoxal phosphate)lysine. Position 558 (arginine 558) interacts with substrate.

Belongs to the group II decarboxylase family. Homodimer. The cofactor is pyridoxal 5'-phosphate. Post-translationally, the N-terminus is blocked. In terms of processing, phosphorylated; which does not affect kinetic parameters or subcellular location. Palmitoylated; which is required for presynaptic clustering.

It is found in the cytoplasm. Its subcellular location is the cytosol. The protein resides in the cytoplasmic vesicle. It localises to the presynaptic cell membrane. The protein localises to the golgi apparatus membrane. The enzyme catalyses L-glutamate + H(+) = 4-aminobutanoate + CO2. Catalyzes the production of GABA. This is Glutamate decarboxylase 2 (Gad2) from Rattus norvegicus (Rat).